A 770-amino-acid polypeptide reads, in one-letter code: Low-density lipoprotein receptor-related protein 3 (770 aa).

The N-terminal stretch at 1-36 is a signal peptide; sequence MEKRAAAGLEGAPGARAQLAVVCLVNIFLTGRLSSA. The Extracellular portion of the chain corresponds to 37-496; the sequence is VPALAACSGK…HGCLAAVPRK (460 aa). Intrachain disulfides connect cysteine 43/cysteine 72, cysteine 99/cysteine 120, cysteine 166/cysteine 178, cysteine 173/cysteine 191, cysteine 185/cysteine 200, cysteine 212/cysteine 227, cysteine 219/cysteine 240, cysteine 234/cysteine 249, and cysteine 254/cysteine 282. Residues 43-159 form the CUB 1 domain; sequence CSGKLEQHTE…QGFRLSYIRG (117 aa). Asparagine 71 carries an N-linked (GlcNAc...) asparagine glycan. 2 LDL-receptor class A domains span residues 165–201 and 211–250; these read SCQADEFRCDNGKCLPGPWQCNTVDECGDGSDEGNCS and LCPGGTFPCSGARSTRCLPVERRCDGLQDCGDGSDEAGCP. Asparagine 199 carries N-linked (GlcNAc...) asparagine glycosylation. A CUB 2 domain is found at 254 to 365; sequence CGRRLGSFYG…HGFNATYQVK (112 aa). The N-linked (GlcNAc...) asparagine glycan is linked to asparagine 359. 2 LDL-receptor class A domains span residues 415-453 and 454-490; these read ACPPDQYPCEGGSGLCYTPADRCNNQKSCPDGADEKNCF and SCQPGTFHCGTNLCIFETWRCDGQEDCQDGSDEHGCL. 6 disulfide bridges follow: cysteine 416–cysteine 430, cysteine 423–cysteine 443, cysteine 437–cysteine 452, cysteine 455–cysteine 467, cysteine 462–cysteine 480, and cysteine 474–cysteine 489. Residues 497–517 traverse the membrane as a helical segment; the sequence is VITAALIGSLVCGLLLVIALG. Residues 518–770 lie on the Cytoplasmic side of the membrane; that stretch reads CAFKLYSLRT…ASDDEALLVC (253 aa). A disordered region spans residues 635-770; it reads LGDGFLQPAP…ASDDEALLVC (136 aa). The span at 689–707 shows a compositional bias: basic and acidic residues; sequence RDPECRPVDKDRKVCREPL. Residues 729-738 show a composition bias toward polar residues; sequence QVSTASSTLG. The span at 761 to 770 shows a compositional bias: acidic residues; the sequence is ASDDEALLVC.

The protein belongs to the LDLR family. In terms of assembly, binds GGA1 and GGA2. In terms of tissue distribution, widely expressed. Highly expressed in skeletal muscle and ovary. Expressed at intermediate level in heart, brain, liver, pancreas, prostate and small intestine. Weakly expressed in testis, colon and leukocyte.

The protein localises to the membrane. Its subcellular location is the coated pit. In terms of biological role, probable receptor, which may be involved in the internalization of lipophilic molecules and/or signal transduction. Its precise role is however unclear, since it does not bind to very low density lipoprotein (VLDL) or to LRPAP1 in vitro. This is Low-density lipoprotein receptor-related protein 3 (LRP3) from Homo sapiens (Human).